A 356-amino-acid polypeptide reads, in one-letter code: Calcium/calmodulin-dependent protein kinase type 1 (356 aa).

Residues 2–7 carry the Nuclear localization signal motif; the sequence is PLFKRR. The Protein kinase domain maps to 22 to 278; it reads YDFRDVLGTG…CQSALEHPWI (257 aa). Residues 28–36 and K52 contribute to the ATP site; that span reads LGTGAFSKV. D144 (proton acceptor) is an active-site residue. Phosphothreonine; by ckk-1 is present on T179. Residues 278-318 are autoinhibitory domain; sequence ISGNTAYTHDIHRTVAVHLKKSLAKRNWKKAFNAAAAIRQL. The interval 298–319 is calmodulin-binding; it reads KSLAKRNWKKAFNAAAAIRQLQ.

The protein belongs to the protein kinase superfamily. CAMK Ser/Thr protein kinase family. CaMK subfamily. Mg(2+) is required as a cofactor.

Its subcellular location is the nucleus. The protein localises to the cytoplasm. The catalysed reaction is L-seryl-[protein] + ATP = O-phospho-L-seryl-[protein] + ADP + H(+). It catalyses the reaction L-threonyl-[protein] + ATP = O-phospho-L-threonyl-[protein] + ADP + H(+). With respect to regulation, activated by Ca(2+)/calmodulin. Binding of calmodulin results in a conformational change that generates functional binding sites for both substrate and ATP, and thus relieves autoinhibition and lowers the Km of substrate binding. Must be phosphorylated by ckk-1 to be maximally active but this does not appear to be required for activity in AFD neurons. Calcium/calmodulin-dependent protein kinase that operates in the calcium-triggered CaMKK-CaMK1 signaling cascade which results in transcriptional activation. Transcriptional activation occurs at least in part through phosphorylation of crh-1. Regulates gene expression, sensory morphology, and function of the AFD thermosensory neurons. Involved in long-term adaptation of AFD neurons to temperatures warmer than the initial acclimatized cultivation temperature. Acts in the FLP thermal nociceptors to moderate the responsiveness to noxious heat and controls neuropeptide release from FLP neurons in response to temperature elevations. Regulates the dauer decision, the decision of the larvae to enter into the alternative stress-resistant and long-lived dauer developmental stage, based on the feeding state, primarily in the AWC sensory neurons. Acts non cell-autonomously in the AWC neurons to regulate expression of the daf-28 insulin-like peptide and cell-autonomously in the ASI sensory neurons to regulate expression of the growth promoting daf-7 in a food-regulated manner. Plays a role in memory-based thermal response of an individual AFD neuron cell. Involved in chemotaxis response in AWC neurons to attractant 2-heptanone, a volatile organic compound emitted by the nematode pathogenic bacterium B.nematocida B16. Represses transcription of glutamate receptor glr-1 in the nucleus basally and in response to change in synaptic activity. The chain is Calcium/calmodulin-dependent protein kinase type 1 (cmk-1) from Caenorhabditis briggsae.